Consider the following 363-residue polypeptide: Peptide chain release factor 1 (363 aa).

At Q237 the chain carries N5-methylglutamine.

It belongs to the prokaryotic/mitochondrial release factor family. Post-translationally, methylated by PrmC. Methylation increases the termination efficiency of RF1.

It localises to the cytoplasm. Peptide chain release factor 1 directs the termination of translation in response to the peptide chain termination codons UAG and UAA. This is Peptide chain release factor 1 from Hydrogenovibrio crunogenus (strain DSM 25203 / XCL-2) (Thiomicrospira crunogena).